Reading from the N-terminus, the 263-residue chain is uncharacterized protein (263 aa).

A disordered region spans residues 22–44 (IDGSDDQSDRTRSSSGDSTSNSL). Residues 34 to 43 (SSSGDSTSNS) show a composition bias toward low complexity.

The protein resides in the mitochondrion. This is an uncharacterized protein from Schizosaccharomyces pombe (strain 972 / ATCC 24843) (Fission yeast).